A 243-amino-acid polypeptide reads, in one-letter code: Putative outer membrane protein RP075 (243 aa).

The N-terminal stretch at 1 to 23 (MLRIVKKLWVILFISNISINSFA) is a signal peptide.

Belongs to the OmpW/AlkL family.

Its subcellular location is the cell outer membrane. This is Putative outer membrane protein RP075 from Rickettsia prowazekii (strain Madrid E).